The chain runs to 1574 residues: Centrosomal protein of 170 kDa protein B (1574 aa).

Residues 23–73 (IFVGRDECELMLQSRSVDKQHAVINYDQDRDEHWVKDLGSLNGTFVNDVRI) enclose the FHA domain. Disordered stretches follow at residues 121–258 (VSVK…GVGG), 316–395 (DWLV…RDPQ), and 409–578 (FDGD…QDQE). 3 stretches are compositionally biased toward basic and acidic residues: residues 147–157 (RPEKGDRRHGA), 182–197 (SEDR…RPKD), and 325–344 (LLRR…DLPV). S360 is modified (phosphoserine). Over residues 370–382 (ASVSGASAEASGE) the composition is skewed to low complexity. A Phosphoserine modification is found at S421. Residues 430–446 (PKADKRRGPGTSDRDRP) are compositionally biased toward basic and acidic residues. The segment covering 452-463 (ATGSSSGPQRAS) has biased composition (polar residues). Basic and acidic residues predominate over residues 465 to 474 (LKREKTEERL). Polar residues predominate over residues 475 to 488 (GNTSPVPRASTRSF). Phosphoserine is present on residues S478 and S490. Positions 518–528 (EKTPPVLPAPL) are enriched in pro residues. S534 bears the Phosphoserine mark. T540 and T541 each carry phosphothreonine. A phosphoserine mark is found at S595, S617, S653, S709, S744, S746, S749, S751, S819, and S843. 6 disordered regions span residues 637-826 (PGMA…RDGL), 839-882 (RSGR…HISS), 924-1300 (SKSA…DPYG), 1333-1358 (AGDG…NTPA), 1377-1407 (NFQK…TNKT), and 1510-1535 (NRAP…TSPA). Polar residues predominate over residues 857–867 (FARQESFTKEP). Residue S947 is modified to Phosphoserine. The span at 950–959 (DTASTISLLS) shows a compositional bias: polar residues. A phosphoserine mark is found at S965 and S981. Residues 996–1005 (ARERMSERQH) show a composition bias toward basic and acidic residues. Residues 1084-1102 (RSSATAQKVQQALTRSNSL) are compositionally biased toward polar residues. The residue at position 1122 (S1122) is a Phosphoserine. The span at 1134–1146 (AANPEPANRAAPE) shows a compositional bias: low complexity. Residues S1166 and S1186 each carry the phosphoserine modification. Positions 1199-1213 (AEARAAAKKAAATAA) are enriched in low complexity. A compositionally biased stretch (polar residues) spans 1265–1282 (HASTATQTPRGSSSTRAR). T1289 is subject to Phosphothreonine. The residue at position 1341 (S1341) is a Phosphoserine. Polar residues-rich tracts occupy residues 1344-1358 (PTRS…NTPA) and 1385-1396 (SMNSHNLDQNMN). T1345 carries the phosphothreonine modification. A Phosphoserine modification is found at S1347. S1530 and S1533 each carry phosphoserine.

The protein belongs to the CEP170 family.

The protein localises to the cytoplasm. It localises to the cytoskeleton. Plays a role in microtubule organization. This Mus musculus (Mouse) protein is Centrosomal protein of 170 kDa protein B (Cep170b).